We begin with the raw amino-acid sequence, 295 residues long: Protein gurken (295 aa).

The N-terminal stretch at 1 to 26 (MMQIPFTRIFKVIFVLSTIVAVTDCC) is a signal peptide. At 27-247 (SSRILLLREH…TAQRKVRMAH (221 aa)) the chain is on the extracellular side. Disordered stretches follow at residues 78 to 111 (EASA…SIAA) and 124 to 175 (TDTW…NDKE). The span at 124–139 (TDTWLASESSTPITDS) shows a compositional bias: polar residues. 2 stretches are compositionally biased toward low complexity: residues 140-152 (ETVT…THTG) and 159-171 (SSSS…TPSP). The EGF-like domain occupies 179-224 (QMLPCSEAYNTSFCLNGGHCFQHPMVNNTVFHSCLCVNDYDGERCA). Cystine bridges form between C183-C198, C192-C212, and C214-C223. N-linked (GlcNAc...) asparagine glycosylation is found at N188 and N205. An interaction with cni region spans residues 215-245 (VNDYDGERCAYKSWNGDYIYSPPTAQRKVRM). Residues 248–268 (IVFSFPVLLMLSSLYVLFAAV) traverse the membrane as a helical segment. Over 269–295 (FMLRNVPDYRRKQQQLHLHKQRFFVRC) the chain is Cytoplasmic.

In terms of assembly, interacts with cni. As to expression, expressed in nurse cells and oocyte up to oogenesis stage 7. Specifically accumulates in dorsal anterior corner of the oocyte during stages 9/10, at later stages expression is seen as an anterior ring. In stage 10 ovaries, it is concentrated between the oocyte nucleus and the adjacent oolemma. During vitellogenesis stage it can be detected at the oocyte surface, especially on the microvilli. It is also found at the microvilli covering the apical surface of the follicular epithelium and within follicle cells.

It localises to the cell membrane. Critical for defining the anterior-posterior and dorsal-ventral axes of the egg. May signal directly to dorsal follicle cells through the receptor torpedo (top). During oogenesis this signaling pathway instructs follicle cells to follow a dorsal pathway of development rather than the default ventral pathway. The sequence is that of Protein gurken (grk) from Drosophila melanogaster (Fruit fly).